We begin with the raw amino-acid sequence, 430 residues long: Serine carboxypeptidase-like 13 (430 aa).

A signal peptide spans 1 to 22 (MSLTLEFLLLLIVLILSHHAHS). 3 disulfide bridges follow: C81–C319, C240–C254, and C278–C285. N-linked (GlcNAc...) asparagine glycosylation is present at N102. S177 is an active-site residue. N299 and N323 each carry an N-linked (GlcNAc...) asparagine glycan. D355 is a catalytic residue. N371 is a glycosylation site (N-linked (GlcNAc...) asparagine). The active site involves H408.

It belongs to the peptidase S10 family. As to expression, expression not detected.

Its subcellular location is the secreted. It carries out the reaction 2 1-O-(trans-sinapoyl)-beta-D-glucose = 1,2-di-O-sinapoyl beta-D-glucose + D-glucose. Catalyzes the formation of 1,2-bis-O-sinapoyl beta-D-glucoside. In Arabidopsis thaliana (Mouse-ear cress), this protein is Serine carboxypeptidase-like 13 (SCPL13).